The following is a 178-amino-acid chain: Fatty-acid and retinol-binding protein 1 (178 aa).

The first 16 residues, 1-16 (MYHRLILLALVGTTMA), serve as a signal peptide directing secretion. 2 coiled-coil regions span residues 67-89 (DAALEALKDKSDKLYKNAVELRN) and 130-153 (KQAARDIIAKYQALSEETKEELKV).

The protein belongs to the fatty-acid and retinol-binding protein (FARBP) family. Post-translationally, not glycosylated.

The protein resides in the secreted. In terms of biological role, binds retinol and different fatty acids. The protein is Fatty-acid and retinol-binding protein 1 of Brugia pahangi (Filarial nematode worm).